A 145-amino-acid chain; its full sequence is Arginine repressor (145 aa).

It belongs to the ArgR family.

Its subcellular location is the cytoplasm. The protein operates within amino-acid biosynthesis; L-arginine biosynthesis [regulation]. In terms of biological role, regulates arginine biosynthesis genes. This chain is Arginine repressor, found in Solibacter usitatus (strain Ellin6076).